The primary structure comprises 235 residues: RNA-free ribonuclease P (235 aa).

The protein belongs to the HARP family.

The catalysed reaction is Endonucleolytic cleavage of RNA, removing 5'-extranucleotides from tRNA precursor.. RNA-free RNase P that catalyzes the removal of the 5'-leader sequence from pre-tRNA to produce the mature 5'-terminus. The polypeptide is RNA-free ribonuclease P (Methanothrix thermoacetophila (strain DSM 6194 / JCM 14653 / NBRC 101360 / PT) (Methanosaeta thermophila)).